Reading from the N-terminus, the 289-residue chain is Rhodopsin (289 aa).

Residues 1-7 (YLVNPAA) lie on the Extracellular side of the membrane. Residues 8–32 (YAALGAYMFLLILIGFPINFLTLYV) traverse the membrane as a helical segment. Residues 33–44 (TLEHKKLRTPLN) are Cytoplasmic-facing. Residues 45–67 (YILLNLAVANLFMVLGGFTTTMY) traverse the membrane as a helical segment. Residues 68–81 (TSMHGYFVLGRLGC) are Extracellular-facing. Cys-81 and Cys-158 are disulfide-bonded. A helical transmembrane segment spans residues 82–104 (NLEAFFATLGGEIALWSLVVLAI). A 'Ionic lock' involved in activated form stabilization motif is present at residues 105 to 107 (ERW). At 105–123 (ERWIVVCKPISNFRFTEDH) the chain is on the cytoplasmic side. A helical membrane pass occupies residues 124-144 (AIMGLAFTWVMALACAVPPLV). Residues 145–173 (GWSRYIPEGMQCSCGVDYYTRAEGFNNES) are Extracellular-facing. An N-linked (GlcNAc...) asparagine glycan is attached at Asn-171. The helical transmembrane segment at 174–195 (FVIYMFIVHFLIPLSVIFFCYG) threads the bilayer. Residues 196–223 (RLLCAVKEAPAAQQESETTQRAEKEVSR) lie on the Cytoplasmic side of the membrane. The chain crosses the membrane as a helical span at residues 224-245 (MVVIMVIGFLVCWLPYASVAWW). At 246–257 (IFCNQGSDFGPI) the chain is on the extracellular side. The helical transmembrane segment at 258–279 (FMTLPSFFAKSAAIYNPMIYIC) threads the bilayer. N6-(retinylidene)lysine is present on Lys-267. The Cytoplasmic portion of the chain corresponds to 280 to 289 (MNKQFRHCMI).

This sequence belongs to the G-protein coupled receptor 1 family. Opsin subfamily. Post-translationally, phosphorylated on some or all of the serine and threonine residues present in the C-terminal region. Contains one covalently linked retinal chromophore.

It localises to the membrane. The protein resides in the cell projection. It is found in the cilium. The protein localises to the photoreceptor outer segment. Functionally, photoreceptor required for image-forming vision at low light intensity. While most salt water fish species use retinal as chromophore, most freshwater fish use 3-dehydroretinal, or a mixture of retinal and 3-dehydroretinal. Light-induced isomerization of 11-cis to all-trans retinal triggers a conformational change that activates signaling via G-proteins. Subsequent receptor phosphorylation mediates displacement of the bound G-protein alpha subunit by arrestin and terminates signaling. The chain is Rhodopsin (rho) from Abyssocottus korotneffi (Baikalian deep-water sculpin).